Reading from the N-terminus, the 1190-residue chain is Phosphatidylinositol-3,5-bisphosphate 3-phosphatase MTMR4 (1190 aa).

S8 carries the phosphoserine modification. The Myotubularin phosphatase domain occupies 153-570 (EHIRCRQEAE…RALHLWTAVY (418 aa)). N320, N345, and I346 together coordinate a 1,2-diacyl-sn-glycero-3-phospho-(1D-myo-inositol-3,5-bisphosphate). Residues N320, N345, and I346 each contribute to the a 1,2-diacyl-sn-glycero-3-phospho-(1D-myo-inositol-3-phosphate) site. C407 serves as the catalytic Phosphocysteine intermediate. A 1,2-diacyl-sn-glycero-3-phospho-(1D-myo-inositol-3,5-bisphosphate)-binding residues include S408, D409, G410, W411, D412, R413, K449, and R453. 6 residues coordinate a 1,2-diacyl-sn-glycero-3-phospho-(1D-myo-inositol-3-phosphate): S408, D409, G410, W411, D412, and R413. An a 1,2-diacyl-sn-glycero-3-phospho-(1D-myo-inositol-3-phosphate)-binding site is contributed by R453. 2 positions are modified to phosphoserine: S610 and S629. Disordered regions lie at residues 616–694 (SACD…FKGH), 724–749 (ETEA…GKPP), and 773–848 (DFPE…PSSV). Polar residues predominate over residues 618 to 637 (CDTSSPLTRTSSDPNLNNHS). The segment covering 782-847 (LTGTPQQPHL…SISHQEQPSS (66 aa)) has biased composition (polar residues). Residues 999–1003 (VPPLY) carry the PY-motif; substrate motif for NEDD4 motif. A coiled-coil region spans residues 1020-1052 (LRQIEAGYRQEVEQLRRQVRELQMRLDIRHCCA). The segment at 1109–1169 (DHMASHCFNC…VCNSCYEHIQ (61 aa)) adopts an FYVE-type zinc-finger fold. Positions 1115, 1118, 1131, 1134, 1139, 1142, 1161, and 1164 each coordinate Zn(2+).

The protein belongs to the protein-tyrosine phosphatase family. Non-receptor class myotubularin subfamily. As to quaternary structure, homooligomeric. Forms MTMR3:MTMR4 heterooligomers; regulates the localization of both proteins. The MTMR3:MTMR4 heterooligomer can also recruit both CEP55 and PLK1; occurs during early mitosis, regulates the phosphorylation of CEP55 by PLK1 and its recruitment to the midbody where it can mediate cell abscission. Interacts with SMAD2 and SMAD3; negatively regulates TGF-beta signaling through SMAD2 and SMAD3 dephosphorylation and retention in endosomes. Interacts with SMAD1; negatively regulates BMP signaling through SMAD1 dephosphorylation and retention in endosomes. Ubiquitinated. Ubiquitination by NEDD4 probably leads to proteasomal degradation. Post-translationally, phosphorylated by CDK1 during mitosis.

The protein localises to the early endosome membrane. It localises to the recycling endosome membrane. Its subcellular location is the late endosome membrane. The protein resides in the cytoplasmic vesicle. It is found in the phagosome membrane. The enzyme catalyses a 1,2-diacyl-sn-glycero-3-phospho-(1D-myo-inositol-3-phosphate) + H2O = a 1,2-diacyl-sn-glycero-3-phospho-(1D-myo-inositol) + phosphate. It catalyses the reaction a 1,2-diacyl-sn-glycero-3-phospho-(1D-myo-inositol-3,5-bisphosphate) + H2O = a 1,2-diacyl-sn-glycero-3-phospho-(1D-myo-inositol-5-phosphate) + phosphate. The catalysed reaction is 1,2-dioctanoyl-sn-glycero-3-phospho-(1-D-myo-inositol-3-phosphate) + H2O = 1,2-dioctanoyl-sn-glycero-3-phospho-(1D-myo-inositol) + phosphate. It carries out the reaction 1,2-dioctanoyl-sn-glycero-3-phospho-(1D-myo-inositol-3,5-bisphosphate) + H2O = 1,2-dioctanoyl-sn-glycero-3-phospho-(1D-myo-inositol-5-phosphate) + phosphate. In terms of biological role, lipid phosphatase that specifically dephosphorylates the D-3 position of phosphatidylinositol 3-phosphate and phosphatidylinositol 3,5-bisphosphate, generating phosphatidylinositol and phosphatidylinositol 5-phosphate. Decreases the levels of phosphatidylinositol 3-phosphate, a phospholipid found in cell membranes where it acts as key regulator of both cell signaling and intracellular membrane traffic, in a subset of endosomal membranes to negatively regulate both endocytic recycling and trafficking and/or maturation of endosomes toward lysosomes. Through phosphatidylinositol 3-phosphate turnover in phagosome membranes regulates phagocytosis and phagosome maturation. By decreasing phosphatidylinositol 3-monophosphate (PI3P) levels in immune cells it can also regulate the innate immune response. Beside its lipid phosphatase activity, can also function as a molecular adapter to regulate midbody abscission during mitotic cytokinesis. Can also negatively regulate TGF-beta and BMP signaling through Smad proteins dephosphorylation and retention in endosomes. The protein is Phosphatidylinositol-3,5-bisphosphate 3-phosphatase MTMR4 of Mus musculus (Mouse).